The primary structure comprises 173 residues: Transcriptional repressor NrdR (173 aa).

A zinc finger spans residues 3 to 34 (CPYCGSLDTQVKDSRPTEDNTAIRRRRVCPDC). The ATP-cone domain occupies 49–139 (LMVVKRSGRR…VYRNFREARD (91 aa)).

It belongs to the NrdR family. Zn(2+) is required as a cofactor.

Its function is as follows. Negatively regulates transcription of bacterial ribonucleotide reductase nrd genes and operons by binding to NrdR-boxes. This chain is Transcriptional repressor NrdR, found in Azorhizobium caulinodans (strain ATCC 43989 / DSM 5975 / JCM 20966 / LMG 6465 / NBRC 14845 / NCIMB 13405 / ORS 571).